A 403-amino-acid chain; its full sequence is Na(+)-translocating NADH-quinone reductase subunit B (403 aa).

9 consecutive transmembrane segments (helical) span residues 56–76 (MMIT…WNTG), 121–141 (AYFL…EVLF), 163–183 (ILPP…GVVI), 220–240 (WTAV…AGGI), 258–278 (IHGS…AVLI), 287–307 (IVTG…LIGS), 312–332 (LFGM…GMIF), 348–368 (WVFG…NPAF), and 371–391 (GMML…HFVI). T230 is subject to FMN phosphoryl threonine.

It belongs to the NqrB/RnfD family. As to quaternary structure, composed of six subunits; NqrA, NqrB, NqrC, NqrD, NqrE and NqrF. FMN serves as cofactor.

The protein resides in the cell inner membrane. It catalyses the reaction a ubiquinone + n Na(+)(in) + NADH + H(+) = a ubiquinol + n Na(+)(out) + NAD(+). In terms of biological role, NQR complex catalyzes the reduction of ubiquinone-1 to ubiquinol by two successive reactions, coupled with the transport of Na(+) ions from the cytoplasm to the periplasm. NqrA to NqrE are probably involved in the second step, the conversion of ubisemiquinone to ubiquinol. The chain is Na(+)-translocating NADH-quinone reductase subunit B from Stutzerimonas stutzeri (strain A1501) (Pseudomonas stutzeri).